Consider the following 575-residue polypeptide: V-type ATP synthase alpha chain (575 aa).

Position 238 to 245 (238 to 245) interacts with ATP; the sequence is GPFGAGKT.

The protein belongs to the ATPase alpha/beta chains family.

It catalyses the reaction ATP + H2O + 4 H(+)(in) = ADP + phosphate + 5 H(+)(out). Its function is as follows. Produces ATP from ADP in the presence of a proton gradient across the membrane. The V-type alpha chain is a catalytic subunit. This Borreliella burgdorferi (strain ZS7) (Borrelia burgdorferi) protein is V-type ATP synthase alpha chain.